Consider the following 639-residue polypeptide: 1-deoxy-D-xylulose-5-phosphate synthase (639 aa).

Residues H79 and 120-122 (AHS) each bind thiamine diphosphate. D151 is a Mg(2+) binding site. Thiamine diphosphate contacts are provided by residues 152–153 (GA), N180, Y289, and E371. Residue N180 participates in Mg(2+) binding.

It belongs to the transketolase family. DXPS subfamily. In terms of assembly, homodimer. Mg(2+) serves as cofactor. The cofactor is thiamine diphosphate.

It carries out the reaction D-glyceraldehyde 3-phosphate + pyruvate + H(+) = 1-deoxy-D-xylulose 5-phosphate + CO2. It functions in the pathway metabolic intermediate biosynthesis; 1-deoxy-D-xylulose 5-phosphate biosynthesis; 1-deoxy-D-xylulose 5-phosphate from D-glyceraldehyde 3-phosphate and pyruvate: step 1/1. In terms of biological role, catalyzes the acyloin condensation reaction between C atoms 2 and 3 of pyruvate and glyceraldehyde 3-phosphate to yield 1-deoxy-D-xylulose-5-phosphate (DXP). This is 1-deoxy-D-xylulose-5-phosphate synthase from Allorhizobium ampelinum (strain ATCC BAA-846 / DSM 112012 / S4) (Agrobacterium vitis (strain S4)).